The sequence spans 309 residues: tRNA pseudouridine synthase B (309 aa).

Asp51 (nucleophile) is an active-site residue.

This sequence belongs to the pseudouridine synthase TruB family. Type 1 subfamily.

The enzyme catalyses uridine(55) in tRNA = pseudouridine(55) in tRNA. Its function is as follows. Responsible for synthesis of pseudouridine from uracil-55 in the psi GC loop of transfer RNAs. This is tRNA pseudouridine synthase B from Coxiella burnetii (strain RSA 331 / Henzerling II).